Reading from the N-terminus, the 154-residue chain is Nascent polypeptide-associated complex subunit beta (154 aa).

The region spanning 33 to 98 (EQDDTKLIEA…PQEKNVTQLI (66 aa)) is the NAC-A/B domain. The segment at 125–154 (APTELNAGAPAGGDEGIPDLIDGEKFDEVE) is disordered.

Belongs to the NAC-beta family. Part of the nascent polypeptide-associated complex (NAC), consisting of EGD2 and EGD1. NAC associates with ribosomes via EGD1.

The protein resides in the cytoplasm. It localises to the nucleus. Its function is as follows. Component of the nascent polypeptide-associated complex (NAC), a dynamic component of the ribosomal exit tunnel, protecting the emerging polypeptides from interaction with other cytoplasmic proteins to ensure appropriate nascent protein targeting. The NAC complex also promotes mitochondrial protein import by enhancing productive ribosome interactions with the outer mitochondrial membrane and blocks the inappropriate interaction of ribosomes translating non-secretory nascent polypeptides with translocation sites in the membrane of the endoplasmic reticulum. EGD1 may act as a transcription factor that exert a negative effect on the expression of several genes that are transcribed by RNA polymerase II. The sequence is that of Nascent polypeptide-associated complex subunit beta (EGD1) from Scheffersomyces stipitis (strain ATCC 58785 / CBS 6054 / NBRC 10063 / NRRL Y-11545) (Yeast).